The following is a 203-amino-acid chain: V-type ATP synthase subunit D (203 aa).

It belongs to the V-ATPase D subunit family.

Produces ATP from ADP in the presence of a proton gradient across the membrane. The protein is V-type ATP synthase subunit D of Chlamydia trachomatis serovar L2 (strain ATCC VR-902B / DSM 19102 / 434/Bu).